We begin with the raw amino-acid sequence, 373 residues long: MSQGRLEERLTISKRELARLLKELKKWSAPATVLLSLYIPPGRPLSDVMTLLRQEYSITDNIKLKRTRQAVKRALSAAMDRLQMLTSTPPNGLVLFCGEDMSTGKFECFMFSPPEPIRVFYYRTDKRFITDFLEDMVEDNNAIGIIIVERDQATIGLLKGARLEVLKELEGFVPGKHKMGGQSQRRYERIIEQMVDEFFKKVGEEASNLLVPLAEKGVLKGVIVAGPGLAKQEFVEGNYLDYRLKKILAPELVDVAYQGLQGLKEAVMKAEKVVEAQMYRDAVNAMEEFKLHLAKGTGMIVYGEKDVEAALEMGAVKTLLIHESREDLEEWVEKAKSSGAQVIVVPESLAEAEWFLKTFGGLAGILRFRISTV.

Belongs to the eukaryotic release factor 1 family. Heterodimer of two subunits, one of which binds GTP.

The protein resides in the cytoplasm. Directs the termination of nascent peptide synthesis (translation) in response to the termination codons UAA, UAG and UGA. The sequence is that of Peptide chain release factor subunit 1 (prf1) from Aeropyrum pernix (strain ATCC 700893 / DSM 11879 / JCM 9820 / NBRC 100138 / K1).